The primary structure comprises 272 residues: 3-methyl-2-oxobutanoate hydroxymethyltransferase (272 aa).

The Mg(2+) site is built by Asp-53 and Asp-92. Residues 53–54, Asp-92, and Lys-120 contribute to the 3-methyl-2-oxobutanoate site; that span reads DS. Glu-122 lines the Mg(2+) pocket. The active-site Proton acceptor is Glu-189.

The protein belongs to the PanB family. In terms of assembly, homodecamer; pentamer of dimers. The cofactor is Mg(2+).

It is found in the cytoplasm. It carries out the reaction 3-methyl-2-oxobutanoate + (6R)-5,10-methylene-5,6,7,8-tetrahydrofolate + H2O = 2-dehydropantoate + (6S)-5,6,7,8-tetrahydrofolate. Its pathway is cofactor biosynthesis; (R)-pantothenate biosynthesis; (R)-pantoate from 3-methyl-2-oxobutanoate: step 1/2. Functionally, catalyzes the reversible reaction in which hydroxymethyl group from 5,10-methylenetetrahydrofolate is transferred onto alpha-ketoisovalerate to form ketopantoate. This Ralstonia pickettii (strain 12J) protein is 3-methyl-2-oxobutanoate hydroxymethyltransferase.